The sequence spans 196 residues: Protein GrpE (196 aa).

Residues 1-26 (MQEPHNQEPIEEQKLSEMEDTLEKQH) are compositionally biased toward basic and acidic residues. Positions 1–40 (MQEPHNQEPIEEQKLSEMEDTLEKQHSGASTENTERAEEG) are disordered.

Belongs to the GrpE family. In terms of assembly, homodimer.

It localises to the cytoplasm. Its function is as follows. Participates actively in the response to hyperosmotic and heat shock by preventing the aggregation of stress-denatured proteins, in association with DnaK and GrpE. It is the nucleotide exchange factor for DnaK and may function as a thermosensor. Unfolded proteins bind initially to DnaJ; upon interaction with the DnaJ-bound protein, DnaK hydrolyzes its bound ATP, resulting in the formation of a stable complex. GrpE releases ADP from DnaK; ATP binding to DnaK triggers the release of the substrate protein, thus completing the reaction cycle. Several rounds of ATP-dependent interactions between DnaJ, DnaK and GrpE are required for fully efficient folding. This is Protein GrpE from Nitrosomonas eutropha (strain DSM 101675 / C91 / Nm57).